The sequence spans 305 residues: MSTQYSILFKQEHAHEDAIWTAAWGRSEKDGSETIVTGSLDDLVKVWKWSDEKLELQWTLEGHQLGVVSVNISQNGAIAASSSLDAHIRLWDLETGKQIKSMDAGPVDAWTVAFSPDSKYIATGSHLGKVNIFGVESGKKEHSLDTRGKFILSIAYSPDGKYLASGAIDGIINIFDIATGKLLHTLEGHAMPIRSLTFSPDSQLLVTASDDGYIKIYDVQHANLAGTLSGHGSWVLSVAFSPDDTHFVSSSSDKSIKVWDTSSRSCVNTFFDHQDQVWSVKYNPTGSKIVSAGDDRAIHIYDCPM.

WD repeat units follow at residues 14 to 57 (AHED…LELQ), 62 to 101 (GHQL…QIKS), 104 to 143 (AGPV…KEHS), 146 to 187 (TRGK…HTLE), 188 to 227 (GHAM…LAGT), 230 to 269 (GHGS…CVNT), and 272 to 305 (DHQD…DCPM).

This sequence belongs to the SKI8 family. Component of the PAF1 complex. Component of the SKI complex.

The protein localises to the nucleus. Its subcellular location is the cytoplasm. Its function is as follows. Component of the PAF1 complex (PAF1C) which has multiple functions during transcription by RNA polymerase II and is implicated in regulation of development and maintenance of embryonic stem cell pluripotency. PAF1C associates with RNA polymerase II through interaction with POLR2A CTD non-phosphorylated and 'Ser-2'- and 'Ser-5'-phosphorylated forms and is involved in transcriptional elongation, acting both independently and synergistically with TCEA1 and in cooperation with the DSIF complex and HTATSF1. Also acts as a component of the SKI complex, a multiprotein complex that assists the RNA-degrading exosome during the mRNA decay and quality-control pathways. The SKI complex catalyzes mRNA extraction from 80S ribosomal complexes in the 3'-5' direction and channels mRNA to the cytosolic exosome for degradation. The chain is Superkiller complex protein 8 (skic8) from Danio rerio (Zebrafish).